The following is a 310-amino-acid chain: Porphobilinogen deaminase (310 aa).

Cys-242 is subject to S-(dipyrrolylmethanemethyl)cysteine.

This sequence belongs to the HMBS family. As to quaternary structure, monomer. It depends on dipyrromethane as a cofactor.

It carries out the reaction 4 porphobilinogen + H2O = hydroxymethylbilane + 4 NH4(+). It functions in the pathway porphyrin-containing compound metabolism; protoporphyrin-IX biosynthesis; coproporphyrinogen-III from 5-aminolevulinate: step 2/4. Its function is as follows. Tetrapolymerization of the monopyrrole PBG into the hydroxymethylbilane pre-uroporphyrinogen in several discrete steps. In Shewanella baltica (strain OS223), this protein is Porphobilinogen deaminase.